A 178-amino-acid polypeptide reads, in one-letter code: ATP-dependent protease subunit HslV (178 aa).

T7 is an active-site residue. Residues G162, C165, and T168 each coordinate Na(+).

It belongs to the peptidase T1B family. HslV subfamily. A double ring-shaped homohexamer of HslV is capped on each side by a ring-shaped HslU homohexamer. The assembly of the HslU/HslV complex is dependent on binding of ATP.

Its subcellular location is the cytoplasm. The catalysed reaction is ATP-dependent cleavage of peptide bonds with broad specificity.. Allosterically activated by HslU binding. In terms of biological role, protease subunit of a proteasome-like degradation complex believed to be a general protein degrading machinery. The protein is ATP-dependent protease subunit HslV of Janthinobacterium sp. (strain Marseille) (Minibacterium massiliensis).